Here is a 150-residue protein sequence, read N- to C-terminus: Large ribosomal subunit protein uL23m (150 aa).

It belongs to the universal ribosomal protein uL23 family. As to quaternary structure, component of the mitochondrial ribosome large subunit (39S) which comprises a 16S rRNA and about 50 distinct proteins.

It localises to the mitochondrion. In Drosophila melanogaster (Fruit fly), this protein is Large ribosomal subunit protein uL23m (mRpL23).